The sequence spans 202 residues: Lysozyme (202 aa).

Catalysis depends on residues Asp8 and Glu99.

It belongs to the glycosyl hydrolase 25 family.

The catalysed reaction is Hydrolysis of (1-&gt;4)-beta-linkages between N-acetylmuramic acid and N-acetyl-D-glucosamine residues in a peptidoglycan and between N-acetyl-D-glucosamine residues in chitodextrins.. Its function is as follows. Helps to release the mature phage particles from the cell wall by breaking down the peptidoglycan. The chain is Lysozyme (lysA) from Lactobacillus delbrueckii (Lactococcus delbrueckii bacteriophage mv1).